The chain runs to 1158 residues: Nuclear receptor-interacting protein 1 (1158 aa).

The interval 1 to 415 (MTHGEELGSD…EESSTPTTID (415 aa)) is interaction with ZNF366. Residues 21–25 (LEGLL) carry the LXXLL motif 1 motif. The tract at residues 33-56 (SGTAVDKKSAGHNEEDQNFNISGS) is disordered. The segment covering 37–47 (VDKKSAGHNEE) has biased composition (basic and acidic residues). The segment at 78 to 333 (MLHLKKARLL…HLNGQARTSS (256 aa)) is repression domain 1. At serine 104 the chain carries Phosphoserine. At lysine 111 the chain carries N6-acetyllysine; alternate. Lysine 111 is covalently cross-linked (Glycyl lysine isopeptide (Lys-Gly) (interchain with G-Cter in SUMO2); alternate). The LXXLL motif 2 signature appears at 133 to 137 (LASLL). N6-acetyllysine is present on lysine 158. Lysine 170 is covalently cross-linked (Glycyl lysine isopeptide (Lys-Gly) (interchain with G-Cter in SUMO2)). The LXXLL motif 3 motif lies at 185–189 (LKTLL). Glycyl lysine isopeptide (Lys-Gly) (interchain with G-Cter in SUMO2) cross-links involve residues lysine 195 and lysine 198. Threonine 207 carries the post-translational modification Phosphothreonine. Serine 218 is subject to Phosphoserine. The LXXLL motif 4 signature appears at 266–270 (LALLL). Lysine 286 and lysine 310 each carry N6-acetyllysine. A Phosphoserine modification is found at serine 356. Residue lysine 372 forms a Glycyl lysine isopeptide (Lys-Gly) (interchain with G-Cter in SUMO2) linkage. At serine 378 the chain carries Phosphoserine. An LXXLL motif 5 motif is present at residues 380-384 (LLHLL). Residues 393–435 (MNGHSHSERGSIFEESSTPTTIDEYSDNNPSFTDDSSGDESSY) form a disordered region. The segment covering 406–435 (EESSTPTTIDEYSDNNPSFTDDSSGDESSY) has biased composition (polar residues). Positions 410-700 (TPTTIDEYSD…PTGPEPGLSG (291 aa)) are repression domain 2. The interval 431-472 (DESSYSNCVPIDLSCKHRTEKSESDQPVSLDNFTQSLLNTWD) is required for targeting to small nuclear foci. A CTBP-binding; principal site motif is present at residues 440-446 (PIDLSCK). 2 positions are modified to N6-acetyllysine: lysine 446 and lysine 481. Serine 487 is modified (phosphoserine). Residues 500 to 504 (LLQLL) carry the LXXLL motif 6 motif. Lysine 508 is covalently cross-linked (Glycyl lysine isopeptide (Lys-Gly) (interchain with G-Cter in SUMO2)). Serine 518 is subject to Phosphoserine. At lysine 528 the chain carries N6-acetyllysine. Residues 540–563 (IESPSTNRTTPVSTPPLLTSSKAG) form a disordered region. Serine 542 bears the Phosphoserine mark. A compositionally biased stretch (low complexity) spans 548–560 (TTPVSTPPLLTSS). At serine 564 the chain carries Phosphoserine. 2 consecutive short sequence motifs (CTBP-binding) follow at residues 565 to 569 (PINLS) and 599 to 603 (SMDLT). 2 disordered regions span residues 592 to 622 (TNTA…AQNS) and 641 to 663 (SSMS…DKPI). Residues 601-610 (DLTKSKDPPG) are compositionally biased toward basic and acidic residues. Lysine 606 carries the N6-acetyllysine modification. Over residues 641–659 (SSMSVEEQRPSKQLLTGNT) the composition is skewed to polar residues. Serine 671 bears the Phosphoserine mark. An LXXLL motif 7 motif is present at residues 713–717 (LQLLL). The disordered stretch occupies residues 716 to 745 (LLGNPNKGKSEKKEKTPLRDESTQEHSERA). The segment covering 723 to 745 (GKSEKKEKTPLRDESTQEHSERA) has biased composition (basic and acidic residues). The interval 735–885 (DESTQEHSER…NIVDAANNHS (151 aa)) is repression domain 3. An interaction with ZNF366 region spans residues 753 to 1158 (VKIKSEPCDD…SVLTIKKESE (406 aa)). Glycyl lysine isopeptide (Lys-Gly) (interchain with G-Cter in SUMO2) cross-links involve residues lysine 756 and lysine 802. Serine 807 carries the phosphoserine modification. The short motif at 819–823 (LSRLL) is the LXXLL motif 8 element. Glycyl lysine isopeptide (Lys-Gly) (interchain with G-Cter in SUMO2) cross-links involve residues lysine 850 and lysine 901. N6-acetyllysine; alternate is present on lysine 931. Lysine 931 is covalently cross-linked (Glycyl lysine isopeptide (Lys-Gly) (interchain with G-Cter in SUMO2); alternate). The LXXLL motif 9 motif lies at 936 to 940 (LKQLL). The short motif at 946-950 (VRDLS) is the CTBP-binding element. The segment at 950 to 974 (SPHRSNSVADSKKKGHKNNVTNSKP) is disordered. Serine 1001 carries the post-translational modification Phosphoserine. A Ligand-dependent nuclear receptor binding motif is present at residues 1061 to 1074 (LTKTNPILYYMLQK). Glycyl lysine isopeptide (Lys-Gly) (interchain with G-Cter in SUMO2) cross-links involve residues lysine 1105, lysine 1115, and lysine 1154. Positions 1118-1158 (FFNLRSPYNSHMGNNASRPHSANGEVYGLLGSVLTIKKESE) are repression domain 4.

As to quaternary structure, interacts with RARA and RXRB homodimers and RARA/RXRB heterodimers in the presence of ligand. Interacts with HDAC1 and HDAC3 via its N-terminal domain. Interacts with NR2C1 (sumoylated form and via the ligand-binding domain); the interaction results in promoting the repressor activity of NR2C1. Interacts with CTBP1, CTBP2, ESR1, HDAC1, HDAC2, HDAC5, HDAC6, NR2C2, NR3C1, NR3C2, YWHAH, JUN and FOS. Found in a complex with both NR3C1 and YWHAH. Interacts with ZNF366. Interacts with RORA. Post-translationally, acetylation regulates its nuclear translocation and corepressive activity. Acetylation abolishes interaction with CTBP1. Phosphorylation enhances interaction with YWHAH.

It localises to the nucleus. In terms of biological role, modulates transcriptional activation by steroid receptors such as NR3C1, NR3C2 and ESR1. Also modulates transcriptional repression by nuclear hormone receptors. Positive regulator of the circadian clock gene expression: stimulates transcription of BMAL1, CLOCK and CRY1 by acting as a coactivator for RORA and RORC. Involved in the regulation of ovarian function. Plays a role in renal development. The chain is Nuclear receptor-interacting protein 1 (NRIP1) from Homo sapiens (Human).